The sequence spans 212 residues: Adapter protein MecA 2 (212 aa).

This sequence belongs to the MecA family. In terms of assembly, homodimer.

Enables the recognition and targeting of unfolded and aggregated proteins to the ClpC protease or to other proteins involved in proteolysis. Acts negatively in the development of competence by binding ComK and recruiting it to the ClpCP protease. When overexpressed, inhibits sporulation. Also involved in Spx degradation by ClpC. In Halalkalibacterium halodurans (strain ATCC BAA-125 / DSM 18197 / FERM 7344 / JCM 9153 / C-125) (Bacillus halodurans), this protein is Adapter protein MecA 2 (mecA2).